The chain runs to 375 residues: Type II restriction enzyme ApaLI (375 aa).

It carries out the reaction Endonucleolytic cleavage of DNA to give specific double-stranded fragments with terminal 5'-phosphates.. Functionally, a subtype P restriction enzyme that recognizes the double-stranded sequence 5'-GTGCAC-3' and cleaves after G-1. The sequence is that of Type II restriction enzyme ApaLI from Acetobacter pasteurianus (Acetobacter turbidans).